Consider the following 223-residue polypeptide: Lipoprotein-releasing system ATP-binding protein LolD (223 aa).

Residues 1 to 223 enclose the ABC transporter domain; the sequence is MAKVFRSGST…DEVEPQSLPA (223 aa). 32 to 39 lines the ATP pocket; that stretch reads GDSGSGKS.

This sequence belongs to the ABC transporter superfamily. Lipoprotein translocase (TC 3.A.1.125) family. As to quaternary structure, the complex is composed of two ATP-binding proteins (LolD) and two transmembrane proteins (LolC and LolE).

The protein resides in the cell inner membrane. In terms of biological role, part of the ABC transporter complex LolCDE involved in the translocation of mature outer membrane-directed lipoproteins, from the inner membrane to the periplasmic chaperone, LolA. Responsible for the formation of the LolA-lipoprotein complex in an ATP-dependent manner. This chain is Lipoprotein-releasing system ATP-binding protein LolD, found in Koribacter versatilis (strain Ellin345).